The following is a 393-amino-acid chain: Ribonucleoside-diphosphate reductase subunit M2 (393 aa).

Residue Ser-18 is modified to Phosphoserine. Fe cation is bound by residues Asp-142, Glu-173, and His-176. Residue Tyr-180 is part of the active site. Glu-236, Glu-270, and His-273 together coordinate Fe cation.

This sequence belongs to the ribonucleoside diphosphate reductase small chain family. Heterodimer of a large and a small subunit. It depends on Fe cation as a cofactor.

It localises to the cytoplasm. The enzyme catalyses a 2'-deoxyribonucleoside 5'-diphosphate + [thioredoxin]-disulfide + H2O = a ribonucleoside 5'-diphosphate + [thioredoxin]-dithiol. Its function is as follows. Provides the precursors necessary for DNA synthesis. Catalyzes the biosynthesis of deoxyribonucleotides from the corresponding ribonucleotides. The protein is Ribonucleoside-diphosphate reductase subunit M2 (RnrS) of Drosophila melanogaster (Fruit fly).